We begin with the raw amino-acid sequence, 388 residues long: Mannitol-1-phosphate 5-dehydrogenase (388 aa).

NAD(+) is bound at residue 5–16; that stretch reads AIQFGGGNIGRG. K213 is an active-site residue.

This sequence belongs to the mannitol dehydrogenase family. As to quaternary structure, monomer.

It carries out the reaction D-mannitol 1-phosphate + NAD(+) = beta-D-fructose 6-phosphate + NADH + H(+). Catalyzes the NAD(H)-dependent interconversion of D-fructose 6-phosphate and D-mannitol 1-phosphate in the mannitol metabolic pathway. Has a strong preference for NADH over NADPH. Required for protection of conidiospores against exogenous stresses such as high temperatures and an oxidative environment. This chain is Mannitol-1-phosphate 5-dehydrogenase (mpdA), found in Aspergillus niger.